The primary structure comprises 310 residues: Beta-ketoacyl-[acyl-carrier-protein] synthase III (310 aa).

Active-site residues include Cys-116 and His-239. The ACP-binding stretch occupies residues 240 to 244 (QANYR). Asn-269 is a catalytic residue.

This sequence belongs to the thiolase-like superfamily. FabH family. In terms of assembly, homodimer.

Its subcellular location is the cytoplasm. It carries out the reaction malonyl-[ACP] + acetyl-CoA + H(+) = 3-oxobutanoyl-[ACP] + CO2 + CoA. The protein operates within lipid metabolism; fatty acid biosynthesis. In terms of biological role, catalyzes the condensation reaction of fatty acid synthesis by the addition to an acyl acceptor of two carbons from malonyl-ACP. Catalyzes the first condensation reaction which initiates fatty acid synthesis and may therefore play a role in governing the total rate of fatty acid production. Possesses both acetoacetyl-ACP synthase and acetyl transacylase activities. Its substrate specificity determines the biosynthesis of branched-chain and/or straight-chain of fatty acids. The chain is Beta-ketoacyl-[acyl-carrier-protein] synthase III from Acholeplasma laidlawii (strain PG-8A).